The following is an 825-amino-acid chain: Transcription regulator galc (825 aa).

A disordered region spans residues 60-102 (RPGPYPYQSSSSSSRELSGSAAKVAIPRTTSASSQSQRRRSAR). The segment covering 68–79 (SSSSSSRELSGS) has biased composition (low complexity). Positions 104–131 (CEPCRQRKIKCDGSKPVCRQCIDHNVSC) form a DNA-binding region, zn(2)-C6 fungal-type. Over residues 239–251 (DEAKSRNRKKEDS) the composition is skewed to basic and acidic residues. 3 disordered regions span residues 239 to 267 (DEAKSRNRKKEDSTDMEDGVAGGHTMTPP), 642 to 663 (APGDPSPDPAVPPSARQGSRRI), and 804 to 825 (HLRDIDNTPSSRAGSMEFERHH).

It localises to the nucleus. Its function is as follows. Transcription factor that negatively regulates the biosynthesis of ochratoxin A (OTA), a mycotoxin composed of a chlorinated type I polyketide dihydroisocoumarin moiety linked to L-phenylalanine, and demonstrated to have nephrotoxic, immunotoxic, genotoxic, neurotoxic, and teratogenic properties. Also regulates cellular redox homeostasis and sensitivity to H(2)O(2). Carbon sources such as sucrose, glucose and arabinose repress gal4, leading to up-regulation of OTA biosynthetic genes and altered cellular redox homeostasis. The polypeptide is Transcription regulator galc (Aspergillus niger (strain ATCC MYA-4892 / CBS 513.88 / FGSC A1513)).